Here is a 544-residue protein sequence, read N- to C-terminus: Chaperonin GroEL (544 aa).

Residues 29–32 (TLGP), Lys-50, 86–90 (DGTTT), Gly-414, and Asp-494 each bind ATP.

It belongs to the chaperonin (HSP60) family. In terms of assembly, forms a cylinder of 14 subunits composed of two heptameric rings stacked back-to-back. Interacts with the co-chaperonin GroES.

It localises to the cytoplasm. It carries out the reaction ATP + H2O + a folded polypeptide = ADP + phosphate + an unfolded polypeptide.. In terms of biological role, together with its co-chaperonin GroES, plays an essential role in assisting protein folding. The GroEL-GroES system forms a nano-cage that allows encapsulation of the non-native substrate proteins and provides a physical environment optimized to promote and accelerate protein folding. This chain is Chaperonin GroEL, found in Amoebophilus asiaticus (strain 5a2).